A 448-amino-acid chain; its full sequence is Trigger factor (448 aa).

Residues 167–253 form the PPIase FKBP-type domain; sequence GSIVRVDFVE…LKDIKRRDIP (87 aa).

Belongs to the FKBP-type PPIase family. Tig subfamily.

The protein localises to the cytoplasm. The enzyme catalyses [protein]-peptidylproline (omega=180) = [protein]-peptidylproline (omega=0). In terms of biological role, involved in protein export. Acts as a chaperone by maintaining the newly synthesized protein in an open conformation. Functions as a peptidyl-prolyl cis-trans isomerase. In Borrelia turicatae (strain 91E135), this protein is Trigger factor.